The sequence spans 319 residues: Acetyl-coenzyme A carboxylase carboxyl transferase subunit alpha (319 aa).

Positions Asn35–Asp296 constitute a CoA carboxyltransferase C-terminal domain.

The protein belongs to the AccA family. Acetyl-CoA carboxylase is a heterohexamer composed of biotin carboxyl carrier protein (AccB), biotin carboxylase (AccC) and two subunits each of ACCase subunit alpha (AccA) and ACCase subunit beta (AccD).

It is found in the cytoplasm. The enzyme catalyses N(6)-carboxybiotinyl-L-lysyl-[protein] + acetyl-CoA = N(6)-biotinyl-L-lysyl-[protein] + malonyl-CoA. Its pathway is lipid metabolism; malonyl-CoA biosynthesis; malonyl-CoA from acetyl-CoA: step 1/1. Functionally, component of the acetyl coenzyme A carboxylase (ACC) complex. First, biotin carboxylase catalyzes the carboxylation of biotin on its carrier protein (BCCP) and then the CO(2) group is transferred by the carboxyltransferase to acetyl-CoA to form malonyl-CoA. The sequence is that of Acetyl-coenzyme A carboxylase carboxyl transferase subunit alpha from Salmonella arizonae (strain ATCC BAA-731 / CDC346-86 / RSK2980).